We begin with the raw amino-acid sequence, 575 residues long: Alpha-(1,6)-fucosyltransferase (575 aa).

Residues 1–9 (MRAWTGSWR) lie on the Cytoplasmic side of the membrane. A helical; Signal-anchor for type II membrane protein transmembrane segment spans residues 10–30 (WIMLILFAWGTLLFYIGGHLV). Residues 31–575 (RDNDHPDHSS…KYPTYPEAEK (545 aa)) lie on the Lumenal side of the membrane. Intrachain disulfides connect Cys-204–Cys-266, Cys-212–Cys-230, and Cys-218–Cys-222. The 288-residue stretch at 206 to 493 (KARKLVCNIN…PDASANFHSL (288 aa)) folds into the GT23 domain. Ser-278 carries the post-translational modification Phosphoserine. Residues 299–305 (PRPPYLP) carry the SH3-binding motif. The segment at 365–366 (RR) is important for donor substrate binding. A disulfide bridge links Cys-465 with Cys-472. In terms of domain architecture, SH3 spans 502 to 563 (QNAHNQIAVY…PSYKVREKIE (62 aa)).

The protein belongs to the glycosyltransferase 23 family. Tyrosine phosphorylated by PKDCC/VLK.

It is found in the golgi apparatus. Its subcellular location is the golgi stack membrane. It catalyses the reaction N(4)-{beta-D-GlcNAc-(1-&gt;2)-alpha-D-Man-(1-&gt;3)-[beta-D-GlcNAc-(1-&gt;2)-alpha-D-Man-(1-&gt;6)]-beta-D-Man-(1-&gt;4)-beta-D-GlcNAc-(1-&gt;4)-beta-D-GlcNAc}-L-asparaginyl-[protein] + GDP-beta-L-fucose = an N(4)-{beta-D-GlcNAc-(1-&gt;2)-alpha-D-Man-(1-&gt;3)-[beta-D-GlcNAc-(1-&gt;2)-alpha-D-Man-(1-&gt;6)]-beta-D-Man-(1-&gt;4)-beta-D-GlcNAc-(1-&gt;4)-[alpha-L-Fuc-(1-&gt;6)]-beta-D-GlcNAc}-L-asparaginyl-[protein] + GDP + H(+). It participates in protein modification; protein glycosylation. Its function is as follows. Catalyzes the addition of fucose in alpha 1-6 linkage to the first GlcNAc residue, next to the peptide chains in N-glycans. In Rattus norvegicus (Rat), this protein is Alpha-(1,6)-fucosyltransferase (Fut8).